The following is a 440-amino-acid chain: Beta-1,3-galactosyl-O-glycosyl-glycoprotein beta-1,6-N-acetylglucosaminyltransferase 3 (440 aa).

Residues 1-12 are Cytoplasmic-facing; the sequence is MKMTGWKKKLCR. A helical; Signal-anchor for type II membrane protein membrane pass occupies residues 13–30; that stretch reads GHHLWALGCYSLLAVVAL. Residues 31 to 440 lie on the Lumenal side of the membrane; that stretch reads RLSLRLKCDV…RHKAIYGTEL (410 aa). 4 cysteine pairs are disulfide-bonded: cysteine 73-cysteine 230, cysteine 164-cysteine 384, cysteine 185-cysteine 212, and cysteine 393-cysteine 425. Asparagine 108 is a glycosylation site (N-linked (GlcNAc...) asparagine).

This sequence belongs to the glycosyltransferase 14 family. In terms of processing, N-glycosylated.

It localises to the golgi apparatus membrane. It catalyses the reaction a 3-O-[beta-D-galactosyl-(1-&gt;3)-N-acetyl-alpha-D-galactosaminyl]-L-seryl-[protein] + UDP-N-acetyl-alpha-D-glucosamine = 3-O-{beta-D-galactosyl-(1-&gt;3)-[N-acetyl-beta-D-glucosaminyl-(1-&gt;6)]-N-acetyl-alpha-D-galactosaminyl}-L-seryl-[protein] + UDP + H(+). It carries out the reaction a 3-O-[beta-D-galactosyl-(1-&gt;3)-N-acetyl-alpha-D-galactosaminyl]-L-threonyl-[protein] + UDP-N-acetyl-alpha-D-glucosamine = a 3-O-{beta-D-galactosyl-(1-&gt;3)-[N-acetyl-beta-D-glucosaminyl-(1-&gt;6)]-N-acetyl-alpha-D-galactosaminyl}-L-threonyl-[protein] + UDP + H(+). The enzyme catalyses a beta-D-Gal-(1-&gt;4)-beta-D-GlcNAc-(1-&gt;3)-beta-D-Gal-(1-&gt;4)-beta-D-GlcNAc derivative + UDP-N-acetyl-alpha-D-glucosamine = a beta-D-Gal-(1-&gt;4)-beta-D-GlcNAc-(1-&gt;3)-[beta-D-GlcNAc-(1-&gt;6)]-beta-D-Gal-(1-&gt;4)-N-acetyl-beta-D-glucosaminyl derivative + UDP + H(+). The catalysed reaction is 3-O-[N-acetyl-beta-D-glucosaminyl-(1-&gt;3)-N-acetyl-alpha-D-galactosaminyl]-L-seryl-[protein] + UDP-N-acetyl-alpha-D-glucosamine = 3-O-[N-acetyl-beta-D-glucosaminyl-(1-&gt;3)-[N-acetyl-beta-D-glucosaminyl-(1-&gt;6)]-N-acetyl-alpha-D-galactosaminyl]-L-seryl-[protein] + UDP + H(+). It catalyses the reaction a 3-O-[N-acetyl-beta-D-glucosaminyl-(1-&gt;3)-N-acetyl-alpha-D-galactosaminyl]-L-threonyl-[protein] + UDP-N-acetyl-alpha-D-glucosamine = 3-O-[N-acetyl-beta-D-glucosaminyl-(1-&gt;3)-[N-acetyl-beta-D-glucosaminyl-(1-&gt;6)]-N-acetyl-alpha-D-galactosaminyl]-L-threonyl-[protein] + UDP + H(+). It participates in protein modification; protein glycosylation. In terms of biological role, glycosyltransferase that can synthesize all known mucin beta 6 N-acetylglucosaminides. Mediates core 2 and core 4 O-glycan branching, 2 important steps in mucin-type biosynthesis. Also has I-branching enzyme activity by converting linear into branched poly-N-acetyllactosaminoglycans, leading to introduce the blood group I antigen during embryonic development. This is Beta-1,3-galactosyl-O-glycosyl-glycoprotein beta-1,6-N-acetylglucosaminyltransferase 3 (GCNT3) from Bos mutus grunniens (Wild yak).